The sequence spans 191 residues: 2-amino-4-hydroxy-6-hydroxymethyldihydropteridine pyrophosphokinase (191 aa).

This sequence belongs to the HPPK family.

The catalysed reaction is 6-hydroxymethyl-7,8-dihydropterin + ATP = (7,8-dihydropterin-6-yl)methyl diphosphate + AMP + H(+). It functions in the pathway cofactor biosynthesis; tetrahydrofolate biosynthesis; 2-amino-4-hydroxy-6-hydroxymethyl-7,8-dihydropteridine diphosphate from 7,8-dihydroneopterin triphosphate: step 4/4. Its function is as follows. Catalyzes the transfer of pyrophosphate from adenosine triphosphate (ATP) to 6-hydroxymethyl-7,8-dihydropterin, an enzymatic step in folate biosynthesis pathway. This chain is 2-amino-4-hydroxy-6-hydroxymethyldihydropteridine pyrophosphokinase (folK), found in Mycobacterium leprae (strain TN).